An 89-amino-acid polypeptide reads, in one-letter code: Co-chaperonin GroES (89 aa).

This sequence belongs to the GroES chaperonin family. In terms of assembly, heptamer of 7 subunits arranged in a ring. Interacts with the chaperonin GroEL.

It is found in the cytoplasm. Together with the chaperonin GroEL, plays an essential role in assisting protein folding. The GroEL-GroES system forms a nano-cage that allows encapsulation of the non-native substrate proteins and provides a physical environment optimized to promote and accelerate protein folding. GroES binds to the apical surface of the GroEL ring, thereby capping the opening of the GroEL channel. The chain is Co-chaperonin GroES from Porphyromonas gingivalis (strain ATCC 33277 / DSM 20709 / CIP 103683 / JCM 12257 / NCTC 11834 / 2561).